The following is a 547-amino-acid chain: Chaperonin GroEL (547 aa).

Residues 30–33 (TLGP), K51, 87–91 (DGTTT), G415, 479–481 (NAA), and D495 contribute to the ATP site.

The protein belongs to the chaperonin (HSP60) family. Forms a cylinder of 14 subunits composed of two heptameric rings stacked back-to-back. Interacts with the co-chaperonin GroES.

Its subcellular location is the cytoplasm. It catalyses the reaction ATP + H2O + a folded polypeptide = ADP + phosphate + an unfolded polypeptide.. Together with its co-chaperonin GroES, plays an essential role in assisting protein folding. The GroEL-GroES system forms a nano-cage that allows encapsulation of the non-native substrate proteins and provides a physical environment optimized to promote and accelerate protein folding. The polypeptide is Chaperonin GroEL (Cupriavidus necator (strain ATCC 17699 / DSM 428 / KCTC 22496 / NCIMB 10442 / H16 / Stanier 337) (Ralstonia eutropha)).